The sequence spans 404 residues: Cysteine desulfurase IscS (404 aa).

Residues 75 to 76 (AT), N155, Q183, and 203 to 205 (SAH) contribute to the pyridoxal 5'-phosphate site. K206 is modified (N6-(pyridoxal phosphate)lysine). T243 is a binding site for pyridoxal 5'-phosphate. The Cysteine persulfide intermediate role is filled by C328. Residue C328 participates in [2Fe-2S] cluster binding.

It belongs to the class-V pyridoxal-phosphate-dependent aminotransferase family. NifS/IscS subfamily. As to quaternary structure, homodimer. Forms a heterotetramer with IscU, interacts with other sulfur acceptors. Requires pyridoxal 5'-phosphate as cofactor.

It localises to the cytoplasm. It catalyses the reaction (sulfur carrier)-H + L-cysteine = (sulfur carrier)-SH + L-alanine. It participates in cofactor biosynthesis; iron-sulfur cluster biosynthesis. In terms of biological role, master enzyme that delivers sulfur to a number of partners involved in Fe-S cluster assembly, tRNA modification or cofactor biosynthesis. Catalyzes the removal of elemental sulfur atoms from cysteine to produce alanine. Functions as a sulfur delivery protein for Fe-S cluster synthesis onto IscU, an Fe-S scaffold assembly protein, as well as other S acceptor proteins. The polypeptide is Cysteine desulfurase IscS (Pseudomonas syringae pv. syringae (strain B728a)).